Here is a 1071-residue protein sequence, read N- to C-terminus: DNA-directed RNA polymerase subunit beta (1071 aa).

It belongs to the RNA polymerase beta chain family. In plastids the minimal PEP RNA polymerase catalytic core is composed of four subunits: alpha, beta, beta', and beta''. When a (nuclear-encoded) sigma factor is associated with the core the holoenzyme is formed, which can initiate transcription.

It is found in the plastid. The protein localises to the chloroplast. It catalyses the reaction RNA(n) + a ribonucleoside 5'-triphosphate = RNA(n+1) + diphosphate. In terms of biological role, DNA-dependent RNA polymerase catalyzes the transcription of DNA into RNA using the four ribonucleoside triphosphates as substrates. This chain is DNA-directed RNA polymerase subunit beta, found in Anthoceros angustus (Hornwort).